The following is a 276-amino-acid chain: Probable endonuclease 4 (276 aa).

Residues His70, His108, Glu143, Asp176, His179, His210, Asp223, His225, and Glu255 each coordinate Zn(2+).

Belongs to the AP endonuclease 2 family. Zn(2+) serves as cofactor.

It carries out the reaction Endonucleolytic cleavage to 5'-phosphooligonucleotide end-products.. Its function is as follows. Endonuclease IV plays a role in DNA repair. It cleaves phosphodiester bonds at apurinic or apyrimidinic (AP) sites, generating a 3'-hydroxyl group and a 5'-terminal sugar phosphate. This chain is Probable endonuclease 4, found in Mesomycoplasma hyopneumoniae (strain 7448) (Mycoplasma hyopneumoniae).